Reading from the N-terminus, the 649-residue chain is Microtubule-associated protein VP6 (649 aa).

It localises to the virion. The protein localises to the host cytoplasm. The protein resides in the host cytoskeleton. Minor inner capsid component. Displays NTPase and RNA 5'-triphosphatase (RTPase) activities. May function as a cofactor of polymerase VP2. Associates with microtubules and plays a role in the formation, structural organization and morphology of viral inclusions, where the assembly of cores and the replication of viral RNA occur. The chain is Microtubule-associated protein VP6 (S6) from Cryphonectria parasitica (Chestnut blight fungus).